A 258-amino-acid polypeptide reads, in one-letter code: Imidazole glycerol phosphate synthase subunit HisF (258 aa).

Residues Asp11 and Asp130 contribute to the active site.

It belongs to the HisA/HisF family. Heterodimer of HisH and HisF.

It is found in the cytoplasm. The enzyme catalyses 5-[(5-phospho-1-deoxy-D-ribulos-1-ylimino)methylamino]-1-(5-phospho-beta-D-ribosyl)imidazole-4-carboxamide + L-glutamine = D-erythro-1-(imidazol-4-yl)glycerol 3-phosphate + 5-amino-1-(5-phospho-beta-D-ribosyl)imidazole-4-carboxamide + L-glutamate + H(+). It participates in amino-acid biosynthesis; L-histidine biosynthesis; L-histidine from 5-phospho-alpha-D-ribose 1-diphosphate: step 5/9. Its function is as follows. IGPS catalyzes the conversion of PRFAR and glutamine to IGP, AICAR and glutamate. The HisF subunit catalyzes the cyclization activity that produces IGP and AICAR from PRFAR using the ammonia provided by the HisH subunit. The polypeptide is Imidazole glycerol phosphate synthase subunit HisF (Nitrobacter hamburgensis (strain DSM 10229 / NCIMB 13809 / X14)).